Consider the following 198-residue polypeptide: Inositol diphosphatase DSP4 (198 aa).

Residues Met-1–Arg-23 are disordered. One can recognise a Tyrosine-protein phosphatase domain in the interval Asn-34 to Cys-188. A WPD loop important for active site topology region spans residues Phe-90 to Ile-102. 1D-myo-inositol hexakisphosphate contacts are provided by Asn-101 and Ile-102. The active-site Phosphocysteine intermediate is Cys-126.

It belongs to the protein-tyrosine phosphatase family. Atypical dual-specificity phosphatase Siw14-like subfamily. As to expression, highly expressed in flowers and at lower levels in roots, leaves, stems and siliques.

It carries out the reaction 5-diphospho-1D-myo-inositol 1,2,3,4,6-pentakisphosphate + H2O = 1D-myo-inositol hexakisphosphate + phosphate + H(+). It catalyses the reaction 1,5-bis(diphospho)-1D-myo-inositol 2,3,4,6-tetrakisphosphate + H2O = 1-diphospho-1D-myo-inositol 2,3,4,5,6-pentakisphosphate + phosphate + 2 H(+). The catalysed reaction is 3,5-bis(diphospho)-1D-myo-inositol 1,2,4,6-tetrakisphosphate + H2O = 3-diphospho-1D-myo-inositol 1,2,4,5,6-pentakisphosphate + phosphate + 2 H(+). The enzyme catalyses 6-diphospho-1D-myo-inositol pentakisphosphate + H2O = 1D-myo-inositol hexakisphosphate + phosphate + H(+). In terms of biological role, cleaves the beta-phosphate at the 5-position of soluble inositol pyrophosphates. Has highest activity on 5-diphosphoinositol 1,2,3,4,6-pentakisphosphate (5-InsP(7)), 1,5-bis-diphosphoinositol 2,3,4,6-tetrakisphosphate (1,5-InsP(8)) and 3,5-InsP(8). Acts as a negative regulator of defense responses against the bacterial pathogen Pseudomonas syringae pv tomato strain DC3000. The chain is Inositol diphosphatase DSP4 from Arabidopsis thaliana (Mouse-ear cress).